Here is a 204-residue protein sequence, read N- to C-terminus: HTH-type transcriptional repressor KstR (204 aa).

The HTH tetR-type domain maps to 18–78 (RERRKRILDA…SALGREFERI (61 aa)). A DNA-binding region (H-T-H motif) is located at residues 41 to 60 (QMRAVAERADVAVGTLYRYF).

In terms of assembly, homodimer.

In terms of biological role, controls the expression of genes used for utilizing diverse lipids as energy sources. The sequence is that of HTH-type transcriptional repressor KstR (kstR) from Mycolicibacterium smegmatis (strain ATCC 700084 / mc(2)155) (Mycobacterium smegmatis).